The primary structure comprises 286 residues: MASSNATNSTSAASAANTNSSAFKSAELAALSGVEAAKRAAAYAAVDNHVKPQHEIIGIGSGSTVPYVVERIAQQGPAVNAKRWFVPTGFQSRELIINAGLRLGDVDSFPSIDVTIDGADEVDNALNCIKGGGACHLREKVLAEAANEFVVVADYRKNGSQLGTKWLQGVPIEVAPFAYAKVLQNLKKMGSDKAVLRMGKAKAGPVVTDNGNFCIDAPFPEAQMKDPSDLLKRIKLLTGVLEVGLFCNICKSAYFGNDDGTITIKTAAGDVQEGVHFDVSKAPATA.

The protein belongs to the ribose 5-phosphate isomerase family.

The protein localises to the cytoplasm. The enzyme catalyses aldehydo-D-ribose 5-phosphate = D-ribulose 5-phosphate. The protein operates within carbohydrate degradation; pentose phosphate pathway; D-ribose 5-phosphate from D-ribulose 5-phosphate (non-oxidative stage): step 1/1. This is Ribose-5-phosphate isomerase (RKI1) from Mycosarcoma maydis (Corn smut fungus).